The primary structure comprises 129 residues: Small ribosomal subunit protein uS9 (129 aa).

Belongs to the universal ribosomal protein uS9 family.

This chain is Small ribosomal subunit protein uS9, found in Nitratiruptor sp. (strain SB155-2).